The chain runs to 467 residues: Putative odorant receptor 85e (467 aa).

At 1 to 60 (MASLQFHGNVDADIRYDISLDPARESNLFRLLMGLQLANGTKPSPRLPKWWPKRLEMIGK) the chain is on the cytoplasmic side. A helical transmembrane segment spans residues 61–81 (VLPKAYCSMVIFTSLHLGVLF). The Extracellular segment spans residues 82–98 (TKTTLDVLPTGELQAIT). The helical transmembrane segment at 99 to 119 (DALTMTIIYFFTGYGTIYWCL) threads the bilayer. Residues 120–159 (RSRRLLAYMEHMNREYRHHSLAGVTFVSSHAAFRMSRNFT) are Cytoplasmic-facing. The chain crosses the membrane as a helical span at residues 160-180 (VVWIMSCLLGVISWGVSPLML). The Extracellular segment spans residues 181–212 (GIRMLPLQCWYPFDALGPGTYTAVYATQLFGQ). A helical transmembrane segment spans residues 213–233 (IMVGMTFGFGGSLFVTLSLLL). The Cytoplasmic segment spans residues 234 to 286 (LGQFDVLYCSLKNLDAHTKLLGGESVNGLSSLQEELLLGDSKRELNQYVLLQE). A helical transmembrane segment spans residues 287–307 (HPTDLLRLSAGRKCPDQGNAF). The Extracellular portion of the chain corresponds to 308–334 (HNALVECIRLHRFILHCSQELENLFSP). Residues 335 to 355 (YCLVKSLQITFQLCLLVFVGV) form a helical membrane-spanning segment. Residues 356–367 (SGTREVLRIVNQ) lie on the Cytoplasmic side of the membrane. The chain crosses the membrane as a helical span at residues 368–388 (LQYLGLTIFELLMFTYCGELL). Topologically, residues 389–467 (SRHSIRSGDA…LAAKKTESEL (79 aa)) are extracellular.

This sequence belongs to the insect chemoreceptor superfamily. Heteromeric odorant receptor channel (TC 1.A.69) family. Or2a subfamily. In terms of assembly, interacts with Orco. Complexes exist early in the endomembrane system in olfactory sensory neurons (OSNs), coupling these complexes to the conserved ciliary trafficking pathway. In terms of tissue distribution, expressed in 15% of the 120 sensory neurons within the maxillary palp.

It localises to the cell membrane. Functionally, odorant receptor which mediates acceptance or avoidance behavior, depending on its substrates. The odorant receptor repertoire encodes a large collection of odor stimuli that vary widely in identity, intensity, and duration. May form a complex with Orco to form odorant-sensing units, providing sensitive and prolonged odorant signaling and calcium permeability. This chain is Putative odorant receptor 85e (Or85e), found in Drosophila melanogaster (Fruit fly).